A 237-amino-acid chain; its full sequence is MRPSRRAPDELRPVTLERGVVKYAEGSCLVKFGDTHVLVTATLEDRLPPWLKGQGRGWVTAEYGMLPRATSERTRREASAGKQSGRTVEIQRLIGRSLRTIINLEALGERQITVDCDVLQADGGTRTASITGAWVALADCVNWMKARNMVKANVLRDNVAAISCGIYNGTPVLDLDYAEDSEAQTDANFVMTGDGRIIEVQGTAEREPFTQDELLALMALAQKGIARLVDLQKLAVA.

Phosphate is bound by residues Arg86 and 124-126 (GTR).

This sequence belongs to the RNase PH family. Homohexameric ring arranged as a trimer of dimers.

The enzyme catalyses tRNA(n+1) + phosphate = tRNA(n) + a ribonucleoside 5'-diphosphate. Functionally, phosphorolytic 3'-5' exoribonuclease that plays an important role in tRNA 3'-end maturation. Removes nucleotide residues following the 3'-CCA terminus of tRNAs; can also add nucleotides to the ends of RNA molecules by using nucleoside diphosphates as substrates, but this may not be physiologically important. Probably plays a role in initiation of 16S rRNA degradation (leading to ribosome degradation) during starvation. This chain is Ribonuclease PH, found in Bradyrhizobium diazoefficiens (strain JCM 10833 / BCRC 13528 / IAM 13628 / NBRC 14792 / USDA 110).